The primary structure comprises 476 residues: Ubiquinone biosynthesis monooxygenase COQ6, mitochondrial (476 aa).

Residues 1 to 35 (MAARIGSMAGLLCVRWWSSAQLAARGGPLVASQRW) constitute a mitochondrion transit peptide. N6-succinyllysine is present on lysine 219.

It belongs to the UbiH/COQ6 family. In terms of assembly, component of a multi-subunit COQ enzyme complex, composed of at least COQ3, COQ4, COQ5, COQ6, COQ7 and COQ9. Interacts with COQ8B and COQ7. The cofactor is FAD. In terms of tissue distribution, expressed in the kidney, in podocytes.

Its subcellular location is the mitochondrion inner membrane. The protein localises to the golgi apparatus. It is found in the cell projection. The catalysed reaction is 4-hydroxy-3-(all-trans-decaprenyl)benzoate + 2 reduced [2Fe-2S]-[ferredoxin] + O2 + 2 H(+) = 3,4-dihydroxy-5-(all-trans-decaprenyl)benzoate + 2 oxidized [2Fe-2S]-[ferredoxin] + H2O. It carries out the reaction 2-methoxy-6-(all-trans-decaprenyl)phenol + 2 reduced [2Fe-2S]-[ferredoxin] + O2 + 2 H(+) = 2-methoxy-6-(all-trans-decaprenyl)benzene-1,4-diol + 2 oxidized [2Fe-2S]-[ferredoxin] + H2O. It functions in the pathway cofactor biosynthesis; ubiquinone biosynthesis. Functionally, FAD-dependent monooxygenase required for two non-consecutive steps during ubiquinone biosynthesis. Required for the C5-ring hydroxylation during ubiquinone biosynthesis by catalyzing the hydroxylation of 4-hydroxy-3-(all-trans-decaprenyl)benzoic acid to 3,4-dihydroxy-5-(all-trans-decaprenyl)benzoic acid. Also acts downstream of COQ4, for the C1-hydroxylation during ubiquinone biosynthesis by catalyzing the hydroxylation of 2-methoxy-6-(all-trans-decaprenyl)phenol to 2-methoxy-6-(all-trans-decaprenyl)benzene-1,4-diol. The electrons required for the hydroxylation reaction are funneled indirectly to COQ6 from NADPH via a ferredoxin/ferredoxin reductase system composed of FDX2 and FDXR. The polypeptide is Ubiquinone biosynthesis monooxygenase COQ6, mitochondrial (Mus musculus (Mouse)).